The sequence spans 207 residues: Negative modulator of initiation of replication (207 aa).

Residues 43 to 54 are compositionally biased toward polar residues; it reads ATPITSSVTPSA. Positions 43–63 are disordered; it reads ATPITSSVTPSAPRQEAVNDE.

It belongs to the SeqA family. In terms of assembly, homodimer. Polymerizes to form helical filaments.

The protein localises to the cytoplasm. Its function is as follows. Negative regulator of replication initiation, which contributes to regulation of DNA replication and ensures that replication initiation occurs exactly once per chromosome per cell cycle. Binds to pairs of hemimethylated GATC sequences in the oriC region, thus preventing assembly of replication proteins and re-initiation at newly replicated origins. Repression is relieved when the region becomes fully methylated. In Psychromonas ingrahamii (strain DSM 17664 / CCUG 51855 / 37), this protein is Negative modulator of initiation of replication.